Here is a 707-residue protein sequence, read N- to C-terminus: Alpha-hemolysin translocation ATP-binding protein HlyB (707 aa).

The region spanning 3 to 125 (SCHKIDYGLY…ALYQGHIILI (123 aa)) is the Peptidase C39 domain. Residue His-83 is part of the active site. The ABC transmembrane type-1 domain occupies 154–436 (FIETLVVSVF…LAQIWQDFQQ (283 aa)). Helical transmembrane passes span 158–178 (LVVSVFLQLFALITPLFFQVV), 191–211 (LNVITVALSVVVVFEIILSGL), 269–289 (ALTSVLDLLFSFIFFAVMWYY), 295–315 (LVILFSLPCYAAWSVFISPIL), and 388–408 (VMIINLWLGAHLVISGDLSIG). The ABC transporter domain occupies 468–703 (ITFRNIRFRY…PESLYSYLYQ (236 aa)). Position 502–509 (502–509 (GRSGSGKS)) interacts with ATP.

It belongs to the ABC transporter superfamily. Protein-1 exporter (TC 3.A.1.109) family. In terms of assembly, homodimer.

Its subcellular location is the cell inner membrane. Its function is as follows. Part of the ABC transporter complex HlyBD involved in hemolysin export. Transmembrane domains (TMD) form a pore in the inner membrane and the ATP-binding domain (NBD) is responsible for energy generation. In Escherichia coli, this protein is Alpha-hemolysin translocation ATP-binding protein HlyB (hlyB).